The sequence spans 393 residues: Probable protein phosphatase 2C 72 (393 aa).

In terms of domain architecture, PPM-type phosphatase spans 49 to 357 (EFSMAVVQAN…DDITVVVVFF (309 aa)). The Mn(2+) site is built by D88 and G89. A helical membrane pass occupies residues 147-167 (LAAVGSCCLVGVICAGNLYIA). Mn(2+) contacts are provided by D289 and D348.

Belongs to the PP2C family. Requires Mg(2+) as cofactor. It depends on Mn(2+) as a cofactor.

The protein localises to the membrane. It carries out the reaction O-phospho-L-seryl-[protein] + H2O = L-seryl-[protein] + phosphate. It catalyses the reaction O-phospho-L-threonyl-[protein] + H2O = L-threonyl-[protein] + phosphate. In Oryza sativa subsp. japonica (Rice), this protein is Probable protein phosphatase 2C 72.